Here is a 481-residue protein sequence, read N- to C-terminus: UDP-glycosyltransferase 72B3 (481 aa).

UDP-alpha-D-glucose is bound by residues serine 277, 347–349 (APQ), 364–372 (HCGWNSSLE), and 386–389 (YAEQ).

This sequence belongs to the UDP-glycosyltransferase family.

Functionally, possesses low quercetin 3-O-glucosyltransferase activity in vitro. In Arabidopsis thaliana (Mouse-ear cress), this protein is UDP-glycosyltransferase 72B3 (UGT72B3).